Consider the following 236-residue polypeptide: Purine nucleoside phosphorylase DeoD-type (236 aa).

Histidine 5 lines the a purine D-ribonucleoside pocket. Residues glycine 21, arginine 25, arginine 44, and 88–91 each bind phosphate; that span reads RVGT. Residues 180-182 and 204-205 contribute to the a purine D-ribonucleoside site; these read EME and SD. Aspartate 205 (proton donor) is an active-site residue.

This sequence belongs to the PNP/UDP phosphorylase family. Homohexamer; trimer of homodimers.

It carries out the reaction a purine D-ribonucleoside + phosphate = a purine nucleobase + alpha-D-ribose 1-phosphate. It catalyses the reaction a purine 2'-deoxy-D-ribonucleoside + phosphate = a purine nucleobase + 2-deoxy-alpha-D-ribose 1-phosphate. In terms of biological role, catalyzes the reversible phosphorolytic breakdown of the N-glycosidic bond in the beta-(deoxy)ribonucleoside molecules, with the formation of the corresponding free purine bases and pentose-1-phosphate. The chain is Purine nucleoside phosphorylase DeoD-type from Shewanella loihica (strain ATCC BAA-1088 / PV-4).